The primary structure comprises 413 residues: Peptidase T (413 aa).

Position 84 (histidine 84) interacts with Zn(2+). Aspartate 86 is an active-site residue. Residue aspartate 146 participates in Zn(2+) binding. Glutamate 180 (proton acceptor) is an active-site residue. 3 residues coordinate Zn(2+): glutamate 181, aspartate 203, and histidine 385.

Belongs to the peptidase M20B family. It depends on Zn(2+) as a cofactor.

The protein resides in the cytoplasm. The catalysed reaction is Release of the N-terminal residue from a tripeptide.. Cleaves the N-terminal amino acid of tripeptides. The chain is Peptidase T from Limosilactobacillus fermentum (strain NBRC 3956 / LMG 18251) (Lactobacillus fermentum).